We begin with the raw amino-acid sequence, 451 residues long: Tetraspanin-14 (451 aa).

The Cytoplasmic segment spans residues 1-56; sequence MPHRAPRRFMKTAPGACDWEQCLLMGSGEPTRARAVVSSSHKQRKPRQEISACLKW. Positions 20 to 24 match the Basolateral membrane targeting motif; sequence EQCLL. A helical transmembrane segment spans residues 57 to 77; sequence LVFLLNSIVFLVGVGILALGV. Residues 78-96 are Extracellular-facing; that stretch reads YLFIKDFREVKLVDIILNP. Residues 97–117 traverse the membrane as a helical segment; the sequence is AILISIFGFSICVVSFFGFMG. Topologically, residues 118 to 130 are cytoplasmic; it reads ALRDNIFLLKCFA. Residues 131 to 151 traverse the membrane as a helical segment; that stretch reads ACVFLSYILVVAVTLVFFTLF. The Extracellular portion of the chain corresponds to 152–285; the sequence is YTDTTEGLSA…QPLRTLFESH (134 aa). Residues N205 and N211 are each glycosylated (N-linked (GlcNAc...) asparagine). Residues 286–306 traverse the membrane as a helical segment; it reads AVHVGAFVALLIVPVCISVCL. At 307 to 451 the chain is on the cytoplasmic side; it reads TNILAKQVDH…TDLVPQKSKS (145 aa). The disordered stretch occupies residues 328–451; that stretch reads NDRRRKRDHN…TDLVPQKSKS (124 aa). The span at 366–376 shows a compositional bias: pro residues; that stretch reads PDIPPPLPPIE. A compositionally biased stretch (low complexity) spans 410 to 434; it reads ATTTRTPPAAAGPAPTPQATTTNRT. Positions 435–444 are enriched in polar residues; that stretch reads HQWVLQQTDL.

The protein belongs to the tetraspanin (TM4SF) family. As to expression, expressed in the germline, particularly in sperm cells. In terms of tissue distribution, expressed in the germline (particularly in sperm cells), anterior sensory cilia, hypodermis and vulva (at protein level). Expressed in the pharynx, hypodermis and vulva (at protein level).

The protein localises to the cell membrane. It is found in the cytoplasmic vesicle membrane. Its subcellular location is the endosome membrane. The protein resides in the early endosome membrane. It localises to the late endosome membrane. The protein localises to the recycling endosome membrane. It is found in the apical cell membrane. Its subcellular location is the basolateral cell membrane. Functionally, functions redundantly with tsp-12 to regulate cell surface levels of the BMP type II receptor daf-4 (but not BMP type I receptor sma-6), probably by regulating endosomal sorting and recycling of receptors, preventing their targeting to degradative lysosomes. Together with tsp-12, regulates cell fate specification in the postembryonic mesodermal M lineage, body size, male development and vulva development, probably by positively modulating BMP-like Sma/Mab signaling. Together with tsp-12 involved in maintaining the structural and functional integrity of the endosomal network. Together with tsp-12, probably acts by modulating the activation of glp-1, Notch-like receptor, to regulate germline maturation. Its function is as follows. Functions redundantly with tsp-12 to regulate cell fate specification in the postembryonic mesodermal M lineage, body size, embryonic and vulva development. In terms of biological role, functions redundantly with tsp-12 to regulate cell fate specification in the postembryonic mesodermal M lineage. Likely plays a complementary role in mesodermal development with tsp-14 isoform a, but may be more critical. The sequence is that of Tetraspanin-14 from Caenorhabditis elegans.